Consider the following 269-residue polypeptide: Flagellar brake protein YcgR (269 aa).

Positions 134-254 (QRRNFYRVTT…SRLLIQRYIT (121 aa)) constitute a PilZ domain.

Belongs to the YcgR family. In terms of assembly, monomer. Interacts with the flagellar basal bodies.

It localises to the bacterial flagellum basal body. Its function is as follows. Acts as a flagellar brake, regulating swimming and swarming in a bis-(3'-5') cyclic diguanylic acid (c-di-GMP)-dependent manner. Binds 1 c-di-GMP dimer per subunit. Increasing levels of c-di-GMP lead to decreased motility. This chain is Flagellar brake protein YcgR, found in Nitrosomonas eutropha (strain DSM 101675 / C91 / Nm57).